A 300-amino-acid chain; its full sequence is Lysenin-related protein 3 (300 aa).

Residues 12-35 (EEIEVDVVAVWKEGYVYENRGDTS) form an N-terminal cap domain region. The segment at 36-109 (VEQKITMTKG…SQVIEHTVTI (74 aa)) is beta-hairpin domain. The segment at 110–158 (PPTSKFTRWKLNADVGGTDIEYMYLIDEVTPISVTQTIPQVIRSRAKIL) is N-terminal cap domain. Residues 159–299 (VGRQIHLGTT…EDKWILEVVN (141 aa)) are C-terminal receptor-binding domain. Residues Lys187, Ser229, Tyr235, and Tyr284 each contribute to the an N-(acyl)-sphingosylphosphocholine site. An intrachain disulfide couples Cys274 to Cys285.

Belongs to the lysenin family. In terms of assembly, binds to sphingomyelin as a monomer by using its C-terminal domain. Forms a nonamer when sphingomyelin/LRP-3 ratio is lower than ca 500. Oligomerization, but not binding, is influenced by the fluidity of sphingomyelin. In terms of tissue distribution, expressed by coelomocytes.

The protein resides in the secreted. It localises to the target cell membrane. Pore-forming toxin that specifically binds sphingomyelin in the plasma membrane of various cells. Has antibacterial and hemolytic activity. The protein is Lysenin-related protein 3 of Eisenia fetida (Red wiggler worm).